A 251-amino-acid polypeptide reads, in one-letter code: Vacuolar protein sorting-associated protein 37D (251 aa).

Positions 93–182 (AENCADKLQR…RRRERSAQPA (90 aa)) constitute a VPS37 C-terminal domain. The segment at 174 to 251 (RRERSAQPAP…RPSQPEPPHR (78 aa)) is disordered. A compositionally biased stretch (pro residues) spans 221 to 251 (PVPPLKGSPGCPLGPAPLLSPRPSQPEPPHR).

It belongs to the VPS37 family. In terms of assembly, component of the ESCRT-I complex (endosomal sorting complex required for transport I) which consists of TSG101, VPS28, a VPS37 protein (VPS37A to -D) and MVB12A or MVB12B in a 1:1:1:1 stoichiometry. Interacts with TSG101 and MVB12A. Component of the ESCRT-I complex (endosomal sorting complex required for transport I) which consists of TSG101, VPS28, a VPS37 protein (VPS37A to -D) and UBAP1 in a 1:1:1:1 stoichiometry.

Its subcellular location is the late endosome membrane. Its function is as follows. Component of the ESCRT-I complex, a regulator of vesicular trafficking process. Required for the sorting of endocytic ubiquitinated cargos into multivesicular bodies. May be involved in cell growth and differentiation. This chain is Vacuolar protein sorting-associated protein 37D, found in Homo sapiens (Human).